The primary structure comprises 445 residues: Ubiquitin carboxyl-terminal hydrolase MINDY-3 (445 aa).

Cys-51 acts as the Nucleophile in catalysis. Phosphoserine is present on Ser-125. His-287 (proton acceptor) is an active-site residue.

It belongs to the MINDY deubiquitinase family. FAM188 subfamily. As to quaternary structure, interacts with COPS5.

It is found in the nucleus. It catalyses the reaction Thiol-dependent hydrolysis of ester, thioester, amide, peptide and isopeptide bonds formed by the C-terminal Gly of ubiquitin (a 76-residue protein attached to proteins as an intracellular targeting signal).. In terms of biological role, hydrolase that can remove 'Lys-48'-linked conjugated ubiquitin from proteins. This Bos taurus (Bovine) protein is Ubiquitin carboxyl-terminal hydrolase MINDY-3 (MINDY3).